The chain runs to 526 residues: Phosphoenolpyruvate carboxykinase (ATP) 2 (526 aa).

Substrate is bound by residues arginine 55, tyrosine 190, and lysine 196. ATP contacts are provided by residues lysine 196, histidine 215, and 231-239 (GLSGTGKTT). Positions 196 and 215 each coordinate Mn(2+). Aspartate 252 is a binding site for Mn(2+). Residues glutamate 280, arginine 317, and threonine 442 each coordinate ATP. A substrate-binding site is contributed by arginine 317.

This sequence belongs to the phosphoenolpyruvate carboxykinase (ATP) family. It depends on Mn(2+) as a cofactor.

The protein resides in the cytoplasm. It carries out the reaction oxaloacetate + ATP = phosphoenolpyruvate + ADP + CO2. Its pathway is carbohydrate biosynthesis; gluconeogenesis. Functionally, involved in the gluconeogenesis. Catalyzes the conversion of oxaloacetate (OAA) to phosphoenolpyruvate (PEP) through direct phosphoryl transfer between the nucleoside triphosphate and OAA. This is Phosphoenolpyruvate carboxykinase (ATP) 2 from Moorella thermoacetica (strain ATCC 39073 / JCM 9320).